The primary structure comprises 430 residues: Asparagine--tRNA ligase (430 aa).

It belongs to the class-II aminoacyl-tRNA synthetase family. Homodimer.

The protein resides in the cytoplasm. It catalyses the reaction tRNA(Asn) + L-asparagine + ATP = L-asparaginyl-tRNA(Asn) + AMP + diphosphate + H(+). The sequence is that of Asparagine--tRNA ligase from Bacillus velezensis (strain DSM 23117 / BGSC 10A6 / LMG 26770 / FZB42) (Bacillus amyloliquefaciens subsp. plantarum).